A 391-amino-acid chain; its full sequence is Ferrochelatase (391 aa).

Fe cation-binding residues include His196 and Glu281.

Belongs to the ferrochelatase family.

Its subcellular location is the cytoplasm. It catalyses the reaction heme b + 2 H(+) = protoporphyrin IX + Fe(2+). It functions in the pathway porphyrin-containing compound metabolism; protoheme biosynthesis; protoheme from protoporphyrin-IX: step 1/1. Functionally, catalyzes the ferrous insertion into protoporphyrin IX. This is Ferrochelatase from Prochlorococcus marinus (strain MIT 9211).